The following is a 231-amino-acid chain: Large ribosomal subunit protein uL1 (231 aa).

It belongs to the universal ribosomal protein uL1 family. In terms of assembly, part of the 50S ribosomal subunit.

Binds directly to 23S rRNA. The L1 stalk is quite mobile in the ribosome, and is involved in E site tRNA release. Functionally, protein L1 is also a translational repressor protein, it controls the translation of the L11 operon by binding to its mRNA. This chain is Large ribosomal subunit protein uL1, found in Ralstonia nicotianae (strain ATCC BAA-1114 / GMI1000) (Ralstonia solanacearum).